A 112-amino-acid chain; its full sequence is Nitrogen regulatory protein P-II (112 aa).

Position 51 is an O-UMP-tyrosine (Y51).

The protein belongs to the P(II) protein family. As to quaternary structure, homotrimer.

Its function is as follows. In nitrogen-limiting conditions, when the ratio of Gln to 2-ketoglutarate decreases, P-II is uridylylated to P-II-UMP. P-II-UMP allows the deadenylation of glutamine synthetase (GS), thus activating the enzyme. Conversely, in nitrogen excess P-II is deuridylated and promotes the adenylation of GS. P-II indirectly controls the transcription of the GS gene (glnA). P-II prevents NR-II-catalyzed conversion of NR-I to NR-I-phosphate, the transcriptional activator of glnA. When P-II is uridylylated to P-II-UMP, these events are reversed. The sequence is that of Nitrogen regulatory protein P-II (glnB) from Rhizobium etli (strain ATCC 51251 / DSM 11541 / JCM 21823 / NBRC 15573 / CFN 42).